The following is a 276-amino-acid chain: Octanoyltransferase LipM (276 aa).

Residues 33–247 (GELKPTLRFY…GFKDAFSLTF (215 aa)) enclose the BPL/LPL catalytic domain. The active-site Acyl-thioester intermediate is the C150.

Belongs to the octanoyltransferase LipM family. Monomer.

The catalysed reaction is octanoyl-[ACP] + L-lysyl-[protein] = N(6)-octanoyl-L-lysyl-[protein] + holo-[ACP] + H(+). Its pathway is protein modification; protein lipoylation via endogenous pathway; protein N(6)-(lipoyl)lysine from octanoyl-[acyl-carrier-protein]. Functionally, catalyzes the transfer of endogenously produced octanoic acid from octanoyl-acyl-carrier-protein onto the lipoyl domain of GcvH, an intermediate carrier during protein lipoylation. This is Octanoyltransferase LipM from Exiguobacterium sp. (strain ATCC BAA-1283 / AT1b).